Consider the following 423-residue polypeptide: Phosphoribosylamine--glycine ligase (423 aa).

In terms of domain architecture, ATP-grasp spans 107-314 (KAFMAKYNIP…LSDLVEAAID (208 aa)). ATP is bound at residue 133 to 194 (VNQKGAPIVI…EDFLQGEEAS (62 aa)). Mg(2+)-binding residues include Glu284 and Asn286.

This sequence belongs to the GARS family. Mg(2+) serves as cofactor. Requires Mn(2+) as cofactor.

It carries out the reaction 5-phospho-beta-D-ribosylamine + glycine + ATP = N(1)-(5-phospho-beta-D-ribosyl)glycinamide + ADP + phosphate + H(+). The protein operates within purine metabolism; IMP biosynthesis via de novo pathway; N(1)-(5-phospho-D-ribosyl)glycinamide from 5-phospho-alpha-D-ribose 1-diphosphate: step 2/2. The polypeptide is Phosphoribosylamine--glycine ligase (Neisseria meningitidis serogroup A / serotype 4A (strain DSM 15465 / Z2491)).